We begin with the raw amino-acid sequence, 198 residues long: uncharacterized protein (198 aa).

A disordered region spans residues 51–74 (EEPDNGDDRGSRRTTGQGRKWAAH).

This is an uncharacterized protein from Homo sapiens (Human).